The following is a 327-amino-acid chain: Vacuolar protein sorting-associated protein 26A (327 aa).

A disordered region spans residues 306-327 (RTNFHQRFESPESQASAEQPEM). Ser315 carries the post-translational modification Phosphoserine. Polar residues predominate over residues 316–327 (PESQASAEQPEM).

Belongs to the VPS26 family. As to quaternary structure, component of the heterotrimeric retromer cargo-selective complex (CSC), also described as vacuolar protein sorting subcomplex (VPS), formed by VPS26 (VPS26A or VPS26B), VPS29 and VPS35. The CSC has a highly elongated structure with VPS26 and VPS29 binding independently at opposite distal ends of VPS35 as central platform. The CSC is believed to associate with variable sorting nexins to form functionally distinct retromer complex variants. The originally described retromer complex (also called SNX-BAR retromer) is a pentamer containing the CSC and a heterodimeric membrane-deforming subcomplex formed between SNX1 or SNX2 and SNX5 or SNX6 (also called SNX-BAR subcomplex); the respective CSC and SNX-BAR subcomplexes associate with low affinity. The CSC associates with SNX3 to form a SNX3-retromer complex. The CSC associates with SNX27, the WASH complex and the SNX-BAR subcomplex to form the SNX27-retromer complex. Interacts with VPS29, VPS35, SNX1, SNX2, SNX5, SNX6, SNX3, SNX27, RAB7A, ECPAS, EHD1, WASHC5, SORL1.

It is found in the cytoplasm. The protein localises to the endosome membrane. Its subcellular location is the early endosome. Acts as a component of the retromer cargo-selective complex (CSC). The CSC is believed to be the core functional component of retromer or respective retromer complex variants acting to prevent missorting of selected transmembrane cargo proteins into the lysosomal degradation pathway. The recruitment of the CSC to the endosomal membrane involves RAB7A and SNX3. The SNX-BAR retromer mediates retrograde transport of cargo proteins from endosomes to the trans-Golgi network (TGN) and is involved in endosome-to-plasma membrane transport for cargo protein recycling. The SNX3-retromer mediates the retrograde endosome-to-TGN transport of WLS distinct from the SNX-BAR retromer pathway. The SNX27-retromer is believed to be involved in endosome-to-plasma membrane trafficking and recycling of a broad spectrum of cargo proteins. The CSC seems to act as recruitment hub for other proteins, such as the WASH complex and TBC1D5. Required for retrograde transport of lysosomal enzyme receptor IGF2R. Required to regulate transcytosis of the polymeric immunoglobulin receptor (pIgR-pIgA). Required for the endosomal localization of WASHC2A (indicative for the WASH complex). Required for the endosomal localization of TBC1D5. Mediates retromer cargo recognition of SORL1 and is involved in trafficking of SORL1 implicated in sorting and processing of APP. Involved in retromer-independent lysosomal sorting of F2R. Involved in recycling of ADRB2. Enhances the affinity of SNX27 for PDZ-binding motifs in cargo proteins. The chain is Vacuolar protein sorting-associated protein 26A from Homo sapiens (Human).